Reading from the N-terminus, the 460-residue chain is Cysteine--tRNA ligase (460 aa).

Cysteine 28 is a Zn(2+) binding site. Residues 30-40 (MTVYDYCHLGH) carry the 'HIGH' region motif. The Zn(2+) site is built by cysteine 209, histidine 234, and glutamate 238. Residues 266–270 (KMSKS) carry the 'KMSKS' region motif. Lysine 269 is a binding site for ATP.

The protein belongs to the class-I aminoacyl-tRNA synthetase family. Monomer. It depends on Zn(2+) as a cofactor.

It localises to the cytoplasm. It catalyses the reaction tRNA(Cys) + L-cysteine + ATP = L-cysteinyl-tRNA(Cys) + AMP + diphosphate. The polypeptide is Cysteine--tRNA ligase (Pseudomonas entomophila (strain L48)).